The chain runs to 190 residues: NADH-quinone oxidoreductase subunit B (190 aa).

Residues cysteine 39, cysteine 40, cysteine 104, and cysteine 135 each contribute to the [4Fe-4S] cluster site.

Belongs to the complex I 20 kDa subunit family. NDH-1 is composed of 14 different subunits. Subunits NuoB, C, D, E, F, and G constitute the peripheral sector of the complex. [4Fe-4S] cluster serves as cofactor.

It is found in the cell inner membrane. The enzyme catalyses a quinone + NADH + 5 H(+)(in) = a quinol + NAD(+) + 4 H(+)(out). Functionally, NDH-1 shuttles electrons from NADH, via FMN and iron-sulfur (Fe-S) centers, to quinones in the respiratory chain. The immediate electron acceptor for the enzyme in this species is believed to be a menaquinone. Couples the redox reaction to proton translocation (for every two electrons transferred, four hydrogen ions are translocated across the cytoplasmic membrane), and thus conserves the redox energy in a proton gradient. The protein is NADH-quinone oxidoreductase subunit B of Prosthecochloris aestuarii (strain DSM 271 / SK 413).